The primary structure comprises 46 residues: Protein PsbN (46 aa).

Residues 10–30 form a helical membrane-spanning segment; it reads LIITILAVTIAFTAVSLYTAF.

The protein belongs to the PsbN family.

The protein localises to the cellular thylakoid membrane. May play a role in photosystem I and II biogenesis. In Acaryochloris marina (strain MBIC 11017), this protein is Protein PsbN.